Here is a 500-residue protein sequence, read N- to C-terminus: Cytochrome P450 11B2, mitochondrial (500 aa).

A mitochondrion-targeting transit peptide spans 1–24 (MALRVTADVWLARPWQCLHRTRAL). A 21-hydroxyprogesterone-binding site is contributed by Phe-381. Residue Cys-447 coordinates heme.

It belongs to the cytochrome P450 family. Heme is required as a cofactor.

The protein localises to the mitochondrion inner membrane. The enzyme catalyses a steroid + 2 reduced [adrenodoxin] + O2 + 2 H(+) = an 11beta-hydroxysteroid + 2 oxidized [adrenodoxin] + H2O. It catalyses the reaction 21-hydroxyprogesterone + 2 reduced [adrenodoxin] + O2 + 2 H(+) = corticosterone + 2 oxidized [adrenodoxin] + H2O. The catalysed reaction is corticosterone + 2 reduced [adrenodoxin] + O2 + 2 H(+) = 18-hydroxycorticosterone + 2 oxidized [adrenodoxin] + H2O. It carries out the reaction 18-hydroxycorticosterone + 2 reduced [adrenodoxin] + O2 + 2 H(+) = aldosterone + 2 oxidized [adrenodoxin] + 2 H2O. The enzyme catalyses 11-deoxycortisol + 2 reduced [adrenodoxin] + O2 + 2 H(+) = cortisol + 2 oxidized [adrenodoxin] + H2O. It catalyses the reaction 21-hydroxyprogesterone + 2 reduced [adrenodoxin] + O2 + 2 H(+) = 18-hydroxy-11-deoxycorticosterone + 2 oxidized [adrenodoxin] + H2O. The catalysed reaction is cortisol + 2 reduced [adrenodoxin] + O2 + 2 H(+) = 18-hydroxycortisol + 2 oxidized [adrenodoxin] + H2O. It carries out the reaction 18-hydroxycortisol + 2 reduced [adrenodoxin] + O2 + 2 H(+) = 18-oxocortisol + 2 oxidized [adrenodoxin] + 2 H2O. The protein operates within steroid biosynthesis. In terms of biological role, a cytochrome P450 monooxygenase that catalyzes the biosynthesis of aldosterone, the main mineralocorticoid in the human body responsible for salt and water homeostasis, thus involved in blood pressure regulation, arterial hypertension, and the development of heart failure. Catalyzes three sequential oxidative reactions of 11-deoxycorticosterone (21-hydroxyprogesterone), namely 11-beta hydroxylation, followed by two successive oxidations at C18 yielding 18-hydroxy and then 18-oxo intermediates (that would not leave the enzyme active site during the consecutive hydroxylation reactions), ending with the formation of aldosterone. Can also produce 18-hydroxycortisol and 18-oxocortisol, derived from successive oxidations of cortisol at C18, normally found at very low levels, but significantly increased in primary aldosteronism, the most common form of secondary hypertension. Mechanistically, uses molecular oxygen inserting one oxygen atom into a substrate and reducing the second into a water molecule. Two electrons are provided by NADPH via a two-protein mitochondrial transfer system comprising flavoprotein FDXR (adrenodoxin/ferredoxin reductase) and nonheme iron-sulfur protein FDX1 or FDX2 (adrenodoxin/ferredoxin). Could also be involved in the androgen metabolic pathway. This Mus musculus (Mouse) protein is Cytochrome P450 11B2, mitochondrial (Cyp11b2).